Consider the following 528-residue polypeptide: Vacuolar fusion protein MON1 homolog (528 aa).

Residues 1 to 16 show a composition bias toward polar residues; the sequence is MEVEQTSVRSDTNSTC. Positions 1–50 are disordered; the sequence is MEVEQTSVRSDTNSTCEYLDAEGDPESPNLYQEADPDQEAEQQNHSIISE.

The protein belongs to the MON1/SAND family. As to quaternary structure, component of the Mon1-Ccz1 guanyl-nucleotide exchange factor complex made up of Mon1, Ccz1 and Bulli; the interaction of Bulli with the Mon1-Ccz1 heterodimer is mediated via the C-terminal Mic1 domain of Bulli. Mon1 and Ccz1 form a stable complex which displays Rab7 GEF activity with or without Bulli; GEF activity is enhanced by Bulli possibly by improving membrane association of the complex. Interacts with Rab5 and Rab7; preferentially binds GTP-bound Rab5 and GDP-bound Rab7.

Its subcellular location is the cytoplasm. It is found in the cytosol. With respect to regulation, the Rab7 guanyl-nucleotide exchange factor (GEF) activity of the Mon1-Ccz1 complex is autoinhibited by the N-terminal disordered region of Mon1. GEF activity is stimulated by Rab5-mediated recruitment to membranes. In terms of biological role, part of the Mon1-Ccz1 guanyl-nucleotide exchange factor complex specific for Rab7 that promotes the exchange of GDP to GTP, converting Rab7 from an inactive GDP-bound form into an active GTP-bound form. Plays an important role in membrane trafficking through the secretory apparatus. Required for recruitment of Rab7 to endosomal and autophagosomal membranes to mediate endolysosomal and autolysosomal vesicle maturation. Required for fusion of multivesicular bodies and lysosomes but not their formation or trafficking. Involved in the replacement of Rab5 (and possibly Rab4) with Rab7, also known as Rab conversion or the Rab cascade, during endosomal maturation. The Mon1-Ccz1 complex is recruited to phosphatidylinositol 3-phosphate (PtdIns[3]P) enriched membranes by Rab5, which stimulates recruitment and guanyl-nucleotide exchange of Rab7. Together with Rab7 required for autolysosome formation in fat cells and autophagic degradation during starvation-induced basal and developmental autophagy. Involved in neuromuscular junction (NMJ) presynaptic bouton function and morphogenesis. Together with Rab7, regulates levels of postsynaptic glutamate receptor GluRIIA in the NMJ presynapse. This chain is Vacuolar fusion protein MON1 homolog, found in Drosophila melanogaster (Fruit fly).